Reading from the N-terminus, the 99-residue chain is Aspartyl/glutamyl-tRNA(Asn/Gln) amidotransferase subunit C (99 aa).

The protein belongs to the GatC family. Heterotrimer of A, B and C subunits.

The catalysed reaction is L-glutamyl-tRNA(Gln) + L-glutamine + ATP + H2O = L-glutaminyl-tRNA(Gln) + L-glutamate + ADP + phosphate + H(+). It carries out the reaction L-aspartyl-tRNA(Asn) + L-glutamine + ATP + H2O = L-asparaginyl-tRNA(Asn) + L-glutamate + ADP + phosphate + 2 H(+). Functionally, allows the formation of correctly charged Asn-tRNA(Asn) or Gln-tRNA(Gln) through the transamidation of misacylated Asp-tRNA(Asn) or Glu-tRNA(Gln) in organisms which lack either or both of asparaginyl-tRNA or glutaminyl-tRNA synthetases. The reaction takes place in the presence of glutamine and ATP through an activated phospho-Asp-tRNA(Asn) or phospho-Glu-tRNA(Gln). The sequence is that of Aspartyl/glutamyl-tRNA(Asn/Gln) amidotransferase subunit C from Burkholderia cenocepacia (strain ATCC BAA-245 / DSM 16553 / LMG 16656 / NCTC 13227 / J2315 / CF5610) (Burkholderia cepacia (strain J2315)).